Consider the following 108-residue polypeptide: Universal stress protein Slr1101 (108 aa).

It belongs to the universal stress protein A family.

This chain is Universal stress protein Slr1101, found in Synechocystis sp. (strain ATCC 27184 / PCC 6803 / Kazusa).